A 342-amino-acid polypeptide reads, in one-letter code: uncharacterized protein (342 aa).

Arg-69 is a substrate binding site. His-176 functions as the Proton donor in the catalytic mechanism. Asp-240 provides a ligand contact to substrate.

Belongs to the aldose epimerase family.

This is an uncharacterized protein from Saccharomyces cerevisiae (strain ATCC 204508 / S288c) (Baker's yeast).